The sequence spans 423 residues: UDP-N-acetylglucosamine 1-carboxyvinyltransferase 1 (423 aa).

A phosphoenolpyruvate-binding site is contributed by 23-24 (KN). Residue Arg-96 coordinates UDP-N-acetyl-alpha-D-glucosamine. The Proton donor role is filled by Cys-120. 2-(S-cysteinyl)pyruvic acid O-phosphothioketal is present on Cys-120. Residues Asp-309 and Val-331 each coordinate UDP-N-acetyl-alpha-D-glucosamine.

It belongs to the EPSP synthase family. MurA subfamily.

It localises to the cytoplasm. It catalyses the reaction phosphoenolpyruvate + UDP-N-acetyl-alpha-D-glucosamine = UDP-N-acetyl-3-O-(1-carboxyvinyl)-alpha-D-glucosamine + phosphate. It functions in the pathway cell wall biogenesis; peptidoglycan biosynthesis. Its function is as follows. Cell wall formation. Adds enolpyruvyl to UDP-N-acetylglucosamine. The protein is UDP-N-acetylglucosamine 1-carboxyvinyltransferase 1 of Streptococcus pyogenes serotype M1.